A 155-amino-acid chain; its full sequence is Putative pre-16S rRNA nuclease (155 aa).

This sequence belongs to the YqgF nuclease family.

The protein resides in the cytoplasm. Could be a nuclease involved in processing of the 5'-end of pre-16S rRNA. The polypeptide is Putative pre-16S rRNA nuclease (Paramagnetospirillum magneticum (strain ATCC 700264 / AMB-1) (Magnetospirillum magneticum)).